The chain runs to 249 residues: ATP synthase subunit a (249 aa).

Helical transmembrane passes span 33–53 (GQVF…SLLA), 92–112 (VPFI…GALI), 131–151 (INTT…AGFS), 196–216 (LVVA…AMIL), and 217–237 (GLFT…SYIG).

The protein belongs to the ATPase A chain family. In terms of assembly, F-type ATPases have 2 components, CF(1) - the catalytic core - and CF(0) - the membrane proton channel. CF(1) has five subunits: alpha(3), beta(3), gamma(1), delta(1), epsilon(1). CF(0) has four main subunits: a, b, b' and c.

The protein localises to the cellular thylakoid membrane. In terms of biological role, key component of the proton channel; it plays a direct role in the translocation of protons across the membrane. This is ATP synthase subunit a from Synechococcus elongatus (strain ATCC 33912 / PCC 7942 / FACHB-805) (Anacystis nidulans R2).